Here is a 184-residue protein sequence, read N- to C-terminus: MALLPILSYPDPRLRTIATPVKEVTAEIKTLITDMIETMYDAQGIGLAASQVDHHIQLIVMDLSEDKDSPRVFINPKVTPLVEEKQPYEEGCLSVPDVYDKVERPNKVRIEALDENGNKIDEEVEGLLAVCIQHEMDHLNGVIFVDYLSRLKQTRARDKVRKVLKIREKQGEQVAEKEPQPANS.

Positions 92 and 134 each coordinate Fe cation. The active site involves glutamate 135. Histidine 138 provides a ligand contact to Fe cation.

It belongs to the polypeptide deformylase family. Fe(2+) serves as cofactor.

The catalysed reaction is N-terminal N-formyl-L-methionyl-[peptide] + H2O = N-terminal L-methionyl-[peptide] + formate. Its function is as follows. Removes the formyl group from the N-terminal Met of newly synthesized proteins. Requires at least a dipeptide for an efficient rate of reaction. N-terminal L-methionine is a prerequisite for activity but the enzyme has broad specificity at other positions. This is Peptide deformylase from Psychrobacter cryohalolentis (strain ATCC BAA-1226 / DSM 17306 / VKM B-2378 / K5).